The chain runs to 496 residues: Serine/threonine-protein kinase Sgk3 (496 aa).

The PX domain maps to 12 to 124; it reads SCPSVSIPSS…AFLQMDSPRH (113 aa). Positions 121 to 157 are disordered; the sequence is SPRHQSDPSEDEDERSTSKPHSTSRNINLGPTGNPHA. 2 positions are modified to phosphoserine: S126 and S129. Polar residues predominate over residues 139–151; it reads KPHSTSRNINLGP. Positions 162 to 419 constitute a Protein kinase domain; it reads FDFLKVIGKG…FLEIQNHPFF (258 aa). Residues 168–176 and K191 contribute to the ATP site; that span reads IGKGSFGKV. The Nuclear localization signal motif lies at 195–205; sequence KKIVLNRKEQK. D286 (proton acceptor) is an active-site residue. The residue at position 320 (T320) is a Phosphothreonine; by PDPK1. The AGC-kinase C-terminal domain maps to 420-496; sequence ESLSWTDLVQ…YAPPSEDLFL (77 aa). At S486 the chain carries Phosphoserine.

The protein belongs to the protein kinase superfamily. AGC Ser/Thr protein kinase family. As to quaternary structure, interacts with GSK3B and FLII. Interacts with PDPK1 in a phosphorylation-dependent manner. In terms of processing, activated by phosphorylation on Ser-486 by an unknown kinase (may be mTORC2 but not confirmed), transforming it into a substrate for PDPK1 which then phosphorylates it on Thr-320. As to expression, widely expressed, predominantly in the heart, spleen and 7-day embryo.

It localises to the cytoplasmic vesicle. The protein localises to the early endosome. Its subcellular location is the recycling endosome. The catalysed reaction is L-seryl-[protein] + ATP = O-phospho-L-seryl-[protein] + ADP + H(+). It carries out the reaction L-threonyl-[protein] + ATP = O-phospho-L-threonyl-[protein] + ADP + H(+). Two specific sites, one in the kinase domain (Thr-320) and the other in the C-terminal regulatory region (Ser-486), need to be phosphorylated for its full activation. Serine/threonine-protein kinase which is involved in the regulation of a wide variety of ion channels, membrane transporters, cell growth, proliferation, survival and migration. Up-regulates Na(+) channels: SCNN1A/ENAC and SCN5A, K(+) channels: KCNA3/KV1.3, KCNE1, KCNQ1 and KCNH2/HERG, epithelial Ca(2+) channels: TRPV5 and TRPV6, chloride channel: BSND, creatine transporter: SLC6A8, Na(+)/dicarboxylate cotransporter: SLC13A2/NADC1, Na(+)-dependent phosphate cotransporter: SLC34A2/NAPI-2B, amino acid transporters: SLC1A5/ASCT2 and SLC6A19, glutamate transporters: SLC1A3/EAAT1, SLC1A6/EAAT4 and SLC1A7/EAAT5, glutamate receptors: GRIA1/GLUR1 and GRIK2/GLUR6, Na(+)/H(+) exchanger: SLC9A3/NHE3, and the Na(+)/K(+) ATPase. Plays a role in the regulation of renal tubular phosphate transport and bone density. Phosphorylates NEDD4L and GSK3B. Positively regulates ER transcription activity through phosphorylation of FLII. Negatively regulates the function of ITCH/AIP4 via its phosphorylation and thereby prevents CXCR4 from being efficiently sorted to lysosomes. The sequence is that of Serine/threonine-protein kinase Sgk3 (Sgk3) from Mus musculus (Mouse).